The sequence spans 254 residues: Triosephosphate isomerase (254 aa).

12–14 (NWK) is a binding site for substrate. Histidine 99 acts as the Electrophile in catalysis. The active-site Proton acceptor is glutamate 169. Residues glycine 175, serine 214, and 235–236 (GG) each bind substrate.

Belongs to the triosephosphate isomerase family. Homodimer.

The protein localises to the cytoplasm. It carries out the reaction D-glyceraldehyde 3-phosphate = dihydroxyacetone phosphate. It participates in carbohydrate biosynthesis; gluconeogenesis. It functions in the pathway carbohydrate degradation; glycolysis; D-glyceraldehyde 3-phosphate from glycerone phosphate: step 1/1. Functionally, involved in the gluconeogenesis. Catalyzes stereospecifically the conversion of dihydroxyacetone phosphate (DHAP) to D-glyceraldehyde-3-phosphate (G3P). The polypeptide is Triosephosphate isomerase (Bartonella tribocorum (strain CIP 105476 / IBS 506)).